Reading from the N-terminus, the 438-residue chain is Putative B3 domain-containing protein Os04g0676650 (438 aa).

The segment covering 1-11 (MADARGSSSSS) has biased composition (low complexity). Disordered regions lie at residues 1–30 (MADA…DFVG) and 225–285 (SSSH…MNQN). Residues 12–30 (GDGGGGEGKGGAGHGDFVG) show a composition bias toward gly residues. Basic and acidic residues predominate over residues 258–269 (RRSDMESEKNDD). Over residues 272-285 (DQTPVSEPPSMNQN) the composition is skewed to polar residues. The TF-B3 DNA-binding region spans 302–404 (LRKELTNSDV…KFVVRGEKAI (103 aa)).

Its subcellular location is the nucleus. The polypeptide is Putative B3 domain-containing protein Os04g0676650 (Oryza sativa subsp. japonica (Rice)).